A 141-amino-acid chain; its full sequence is Large ribosomal subunit protein uL16 (141 aa).

Positions 1–20 (MLMPKRTKYRKQQKGRNRGK) are disordered.

The protein belongs to the universal ribosomal protein uL16 family. As to quaternary structure, part of the 50S ribosomal subunit.

Its function is as follows. Binds 23S rRNA and is also seen to make contacts with the A and possibly P site tRNAs. The polypeptide is Large ribosomal subunit protein uL16 (Nautilia profundicola (strain ATCC BAA-1463 / DSM 18972 / AmH)).